The following is an 853-amino-acid chain: Bromodomain-containing protein bet-1 (853 aa).

The segment covering 1 to 19 has biased composition (polar residues); that stretch reads MSEGSGDQSQQRPWASPRQ. 2 disordered regions span residues 1–22 and 141–245; these read MSEG…QQPI and SLEQ…LRAK. The region spanning 39–145 is the Bromo 1 domain; the sequence is RHTNKLDYIM…EVIKKSLEQA (107 aa). Basic and acidic residues predominate over residues 141–153; the sequence is SLEQAPREEHDMD. 2 stretches are compositionally biased toward low complexity: residues 166 to 175 and 192 to 215; these read SDGGSKSSSS and SEVS…SVAA. Residue Lys252 forms a Glycyl lysine isopeptide (Lys-Gly) (interchain with G-Cter in SUMO) linkage. A Bromo 2 domain is found at 257–366; that stretch reads QPLLPSMKPC…EVFDRRWAEL (110 aa). The span at 369–381 shows a compositional bias: low complexity; sequence SSSRASSVAPQSA. Residues 369 to 418 are disordered; it reads SSSRASSVAPQSAPIAPTPKVAKSSAPKEPKESRKEHKKETTFEASGAKS. Positions 394–410 are enriched in basic and acidic residues; the sequence is APKEPKESRKEHKKETT. Residues 419–458 adopt a coiled-coil conformation; sequence EDLMQINNALSMIREREEKLKAELAAAQAIKDKLTSVKNR. The NET domain occupies 516 to 601; sequence DSDDEDNKMA…TIPTLNGNGD (86 aa). Disordered stretches follow at residues 594-814 and 819-838; these read PTLN…DEQT and MRME…VSLS. Low complexity predominate over residues 612–624; it reads TSSGATGSKGSSS. Polar residues predominate over residues 684 to 696; that stretch reads QPPSTSREWNQSS. The span at 708–736 shows a compositional bias: low complexity; the sequence is QPPMSRVPASSSTSVSAIGKNNAAASSNS. Residues 786–807 show a composition bias toward polar residues; that stretch reads QFFQSQPTTSATIRSPTESQPG. Residues 819 to 832 show a composition bias toward basic and acidic residues; sequence MRMEAKRARQKEDE.

Belongs to the BET family. In terms of assembly, interacts with acetylated histone H4. Interacts (via BROMO domain 2) with smo-1 and ubc-9. In terms of tissue distribution, expressed in T-cells, Q-cells, V5-cells and their descendants such as somatic gonad and syncytium.

Its subcellular location is the nucleus. It is found in the chromosome. Functionally, required for the establishment and maintenance of stable cell fate in several lineages including V5.pa, T, Z1/Z4 and QR lineages probably by repressing the expression of cell fate determinants. Required to maintain non-distal tip cell (DTC) fate of somatic gonadal cells through the htz-1-mediated repression of transcription factor ceh-22. Regulates the subnuclear localization of histone variant htz-1 in somatic gonadal cells. Plays a role in the attenuation of the let-60/ras pathway, probably by preventing expression of activators of the pathway. Involved in adult locomotion. Acts together with the sumoylation pathway to prevent muscle myosin depletion in aging adults probably by preventing myoblast growth factor receptor egl-15 overexpression. May play a role in vulva development. This Caenorhabditis elegans protein is Bromodomain-containing protein bet-1.